A 118-amino-acid polypeptide reads, in one-letter code: Protein YLR162W (118 aa).

The segment covering 1-20 (MQHTLTRTASLPERSSSAHS) has biased composition (polar residues). The disordered stretch occupies residues 1–26 (MQHTLTRTASLPERSSSAHSAATALP). A helical membrane pass occupies residues 38 to 58 (LVPLLCIFWFVFVSMSPLPPA).

Its subcellular location is the membrane. Its function is as follows. Overexpression confers resistance to the antimicrobial peptide MiAMP1. This chain is Protein YLR162W, found in Saccharomyces cerevisiae (strain ATCC 204508 / S288c) (Baker's yeast).